Consider the following 378-residue polypeptide: Putative dioxygenase VC_1345 (378 aa).

H288, D294, and H324 together coordinate Fe cation.

This sequence belongs to the homogentisate dioxygenase family. It depends on Fe cation as a cofactor.

The chain is Putative dioxygenase VC_1345 from Vibrio cholerae serotype O1 (strain ATCC 39315 / El Tor Inaba N16961).